Here is a 200-residue protein sequence, read N- to C-terminus: Adenylate kinase (200 aa).

10–15 is a binding site for ATP; it reads GAGKGT. Residues 30–59 form an NMP region; that stretch reads STGDMLRAAVAAETPVGLEAKAIMESGGLV. AMP contacts are provided by residues threonine 31, arginine 36, 57–59, 85–88, and glutamine 92; these read GLV and GFPR. The LID stretch occupies residues 126–142; sequence KRAEETAARGQPVRKDD. Arginine 127 is an ATP binding site. Arginine 139 and arginine 150 together coordinate AMP. Lysine 178 contributes to the ATP binding site.

It belongs to the adenylate kinase family. Monomer.

Its subcellular location is the cytoplasm. The catalysed reaction is AMP + ATP = 2 ADP. The protein operates within purine metabolism; AMP biosynthesis via salvage pathway; AMP from ADP: step 1/1. Functionally, catalyzes the reversible transfer of the terminal phosphate group between ATP and AMP. Plays an important role in cellular energy homeostasis and in adenine nucleotide metabolism. The protein is Adenylate kinase of Methylorubrum extorquens (strain CM4 / NCIMB 13688) (Methylobacterium extorquens).